The sequence spans 215 residues: Adenylate kinase (215 aa).

10–15 (GTGKGT) contacts ATP. Residues 30 to 59 (STGHILRKISTKKTLFGEKIKNIINSGKLV) are NMP. Residues threonine 31, arginine 36, 57 to 59 (KLV), 85 to 88 (GFPR), and glutamine 92 contribute to the AMP site. The tract at residues 122–157 (TRTINPITGTIYNNVIQKNSELKNLKINTLKSRLDD) is LID. Residues arginine 123 and 132–133 (IY) contribute to the ATP site. AMP-binding residues include arginine 154 and arginine 165. Asparagine 198 contacts ATP.

Belongs to the adenylate kinase family. Monomer.

Its subcellular location is the cytoplasm. It carries out the reaction AMP + ATP = 2 ADP. The protein operates within purine metabolism; AMP biosynthesis via salvage pathway; AMP from ADP: step 1/1. Catalyzes the reversible transfer of the terminal phosphate group between ATP and AMP. Plays an important role in cellular energy homeostasis and in adenine nucleotide metabolism. This is Adenylate kinase from Buchnera aphidicola subsp. Baizongia pistaciae (strain Bp).